The sequence spans 534 residues: Melanopsin-B (534 aa).

The Extracellular portion of the chain corresponds to 1–32; it reads MDLGKTVEYGTHRQDAIAQIDVPDQVLYTIGS. Residues 33–53 form a helical membrane-spanning segment; it reads FILIIGSVGIIGNMLVLYAFY. Residues 54-64 are Cytoplasmic-facing; that stretch reads RNKKLRTAPNY. A helical membrane pass occupies residues 65 to 85; sequence FIINLAISDFLMSATQAPVCF. Over 86-102 the chain is Extracellular; the sequence is LSSLHREWILGDIGCNV. C100 and C178 are disulfide-bonded. The helical transmembrane segment at 103-123 threads the bilayer; that stretch reads YAFCGALFGITSMMTLLAISI. Residues 124–146 lie on the Cytoplasmic side of the membrane; sequence NRYIVITKPLQSIQWSSKKRTSQ. Residues 147 to 167 form a helical membrane-spanning segment; sequence IIVLVWMYSLMWSLAPLLGWS. The Extracellular portion of the chain corresponds to 168 to 198; it reads SYVPEGLRISCTWDYVTSTMSNRSYTMMLCC. N189 carries an N-linked (GlcNAc...) asparagine glycan. A helical membrane pass occupies residues 199 to 219; that stretch reads CVFFIPLIVISHCYLFMFLAI. Topologically, residues 220 to 250 are cytoplasmic; it reads RSTGRNVQKLGSYGRQSFLSQSMKNEWKMAK. The helical transmembrane segment at 251–271 threads the bilayer; the sequence is IAFVIIIVFVLSWSPYACVTL. Residues 272–286 lie on the Extracellular side of the membrane; it reads IAWAGHGKSLTPYSK. The helical transmembrane segment at 287-307 threads the bilayer; that stretch reads TVPAVIAKASAIYNPIIYGII. An N6-(retinylidene)lysine modification is found at K294. At 308–534 the chain is on the cytoplasmic side; that stretch reads HPKYRETIHK…LYEVVERFLS (227 aa). Positions 478-501 are disordered; the sequence is SNISETKEEHDNNSEEKSKRTEEE. Over residues 482 to 499 the composition is skewed to basic and acidic residues; sequence ETKEEHDNNSEEKSKRTE.

Belongs to the G-protein coupled receptor 1 family. Opsin subfamily. Highest level in the iris, high level in the inner nuclear layer, possibly in horizontal cells, and lowest level in retinal pigment epithelium. Expressed in melanophore cells of the skin.

The protein localises to the cell membrane. Functionally, photoreceptor implicated in non-image-forming responses to light. May be able to isomerize covalently bound all-trans retinal back to 11-cis retinal. This is Melanopsin-B from Xenopus laevis (African clawed frog).